The primary structure comprises 74 residues: Putative defensin-like protein 12 (74 aa).

Positions 1–26 (MAKPCAAFLVFLCLSMLILSIPDISC) are cleaved as a signal peptide. 3 cysteine pairs are disulfide-bonded: Cys26/Cys50, Cys33/Cys59, and Cys39/Cys61.

This sequence belongs to the DEFL family.

It localises to the secreted. The sequence is that of Putative defensin-like protein 12 from Arabidopsis thaliana (Mouse-ear cress).